Here is a 448-residue protein sequence, read N- to C-terminus: NADP-specific glutamate dehydrogenase (448 aa).

Substrate is bound by residues lysine 88, glutamine 109, and lysine 112. Catalysis depends on lysine 124, which acts as the Proton donor. Substrate is bound at residue glycine 163. Positions 207 and 238 each coordinate NADP(+). Residue serine 381 participates in substrate binding.

The protein belongs to the Glu/Leu/Phe/Val dehydrogenases family. In terms of assembly, homohexamer.

It catalyses the reaction L-glutamate + NADP(+) + H2O = 2-oxoglutarate + NH4(+) + NADPH + H(+). Functionally, catalyzes the reversible oxidative deamination of glutamate to alpha-ketoglutarate and ammonia. The protein is NADP-specific glutamate dehydrogenase (gdhA) of Helicobacter pylori (strain J99 / ATCC 700824) (Campylobacter pylori J99).